A 258-amino-acid chain; its full sequence is Cytosolic Fe-S cluster assembly factor Nubp2 homolog (258 aa).

Glycine 14–serine 21 is a binding site for ATP. Cysteine 188 and cysteine 191 together coordinate [4Fe-4S] cluster.

It belongs to the Mrp/NBP35 ATP-binding proteins family. NUBP2/CFD1 subfamily. Heterotetramer of 2 Nubp1 and 2 Nubp2 chains. The cofactor is [4Fe-4S] cluster.

It localises to the cytoplasm. Its function is as follows. Component of the cytosolic iron-sulfur (Fe/S) protein assembly (CIA) machinery. Required for maturation of extramitochondrial Fe-S proteins. The Nubp1-Nubp2 heterotetramer forms a Fe-S scaffold complex, mediating the de novo assembly of an Fe-S cluster and its transfer to target apoproteins. This is Cytosolic Fe-S cluster assembly factor Nubp2 homolog from Drosophila pseudoobscura pseudoobscura (Fruit fly).